The sequence spans 353 residues: ATP-dependent kinase YFH7 (353 aa).

31 to 39 (GSPGSGKST) is a binding site for ATP.

Belongs to the YFH7 family.

In terms of biological role, ATP-dependent kinase that could be involved in endoplasmic reticulum membrane assembly. The sequence is that of ATP-dependent kinase YFH7 (YFH7) from Saccharomyces cerevisiae (strain JAY291) (Baker's yeast).